The primary structure comprises 243 residues: Venom nerve growth factor 2 (243 aa).

Residues 1–18 (MSMLCYTLIIAFLIGIWA) form the signal peptide. Residues 19–125 (APKSEDNVPL…TLNRNIRAKR (107 aa)) constitute a propeptide that is removed on maturation. Residues 47–66 (GLKTSRNTDQRHPAPKKAED) are compositionally biased toward basic and acidic residues. The tract at residues 47 to 67 (GLKTSRNTDQRHPAPKKAEDQ) is disordered. 2 disulfides stabilise this stretch: Cys-139–Cys-204 and Cys-192–Cys-234. Residue Asn-148 is glycosylated (N-linked (GlcNAc...) asparagine).

It belongs to the NGF-beta family. As to quaternary structure, homodimer; non-covalently linked. In terms of tissue distribution, expressed by the venom gland.

The protein localises to the secreted. Nerve growth factor is important for the development and maintenance of the sympathetic and sensory nervous systems. It stimulates division and differentiation of sympathetic and embryonic sensory neurons as well as basal forebrain cholinergic neurons in the brain. Its relevance in the snake venom is not clear. However, it has been shown to inhibit metalloproteinase-dependent proteolysis of platelet glycoprotein Ib alpha, suggesting a metalloproteinase inhibition to prevent metalloprotease autodigestion and/or protection against prey proteases. Binds a lipid between the two protein chains in the homodimer. The lipid-bound form promotes histamine relase from mouse mast cells, contrary to the lipid-free form. This chain is Venom nerve growth factor 2, found in Pseudonaja textilis (Eastern brown snake).